The sequence spans 417 residues: NADH-quinone oxidoreductase subunit D (417 aa).

The protein belongs to the complex I 49 kDa subunit family. As to quaternary structure, NDH-1 is composed of 14 different subunits. Subunits NuoB, C, D, E, F, and G constitute the peripheral sector of the complex.

It localises to the cell inner membrane. It catalyses the reaction a quinone + NADH + 5 H(+)(in) = a quinol + NAD(+) + 4 H(+)(out). NDH-1 shuttles electrons from NADH, via FMN and iron-sulfur (Fe-S) centers, to quinones in the respiratory chain. The immediate electron acceptor for the enzyme in this species is believed to be ubiquinone. Couples the redox reaction to proton translocation (for every two electrons transferred, four hydrogen ions are translocated across the cytoplasmic membrane), and thus conserves the redox energy in a proton gradient. The polypeptide is NADH-quinone oxidoreductase subunit D (Coxiella burnetii (strain Dugway 5J108-111)).